A 74-amino-acid polypeptide reads, in one-letter code: MCLLMLVLGAMYVQGWHSAGFGKRTLKKRCYPGQPGCGHCSRPNYCEGARCESGFHDCGSDHWCDASGDRCCCA.

The signal sequence occupies residues 1–18; that stretch reads MCLLMLVLGAMYVQGWHS. Positions 19 to 27 are cleaved as a propeptide — removed in mature form; that stretch reads AGFGKRTLK. 5 disulfide bridges follow: cysteine 30–cysteine 37, cysteine 40–cysteine 71, cysteine 46–cysteine 64, cysteine 51–cysteine 72, and cysteine 58–cysteine 73.

The protein belongs to the Cnidaria small cysteine-rich protein (SCRiP) family. In terms of tissue distribution, detected in mucus secreted from ectoderm.

It is found in the secreted. In terms of biological role, potentiates activation of mammalian TRPA1, a non-selective cation channel involved in perception of pain, in vitro yet has an analgesic and anti-inflammatory effect in vivo. Has antibacterial activity against C.glutamicum (MIC=50 uM) and, to a lesser extent, against S.aureus but not against P.aeruginosa or E.coli. The protein is Tau-AnmTx Ueq 12-1 of Urticina eques (Sea anemone).